Here is a 364-residue protein sequence, read N- to C-terminus: Putative protein C31H2.4 (364 aa).

2 consecutive VOC domains span residues 6–134 and 161–320; these read AIHH…LGEF and LMDH…IFSK. Fe cation-binding residues include histidine 164, histidine 248, and glutamate 331.

The protein belongs to the 4HPPD family. Requires Fe cation as cofactor.

The sequence is that of Putative protein C31H2.4 from Caenorhabditis elegans.